The sequence spans 406 residues: Argininosuccinate synthase (406 aa).

Residues 11–19 (AYSGGLDTS) and A38 contribute to the ATP site. Residues Y91 and S96 each contribute to the L-citrulline site. G121 lines the ATP pocket. L-aspartate contacts are provided by T123, N127, and D128. An L-citrulline-binding site is contributed by N127. Residues R131, S181, S190, E266, and Y278 each coordinate L-citrulline.

It belongs to the argininosuccinate synthase family. Type 1 subfamily. In terms of assembly, homotetramer.

Its subcellular location is the cytoplasm. It carries out the reaction L-citrulline + L-aspartate + ATP = 2-(N(omega)-L-arginino)succinate + AMP + diphosphate + H(+). It functions in the pathway amino-acid biosynthesis; L-arginine biosynthesis; L-arginine from L-ornithine and carbamoyl phosphate: step 2/3. In Campylobacter hominis (strain ATCC BAA-381 / DSM 21671 / CCUG 45161 / LMG 19568 / NCTC 13146 / CH001A), this protein is Argininosuccinate synthase.